The chain runs to 260 residues: DNA import protein CedA (260 aa).

6 helical membrane passes run Leu13–Tyr33, Ile47–Leu67, Ala110–Phe130, Ile140–Phe160, Ala169–Ala189, and Ile220–Met240.

In terms of assembly, forms a complex composed of CedA, CedA1 and CedA2.

Its subcellular location is the cell membrane. In terms of biological role, part of the Ced system, which is involved in DNA import. This chain is DNA import protein CedA, found in Sulfolobus acidocaldarius (strain ATCC 33909 / DSM 639 / JCM 8929 / NBRC 15157 / NCIMB 11770).